Reading from the N-terminus, the 160-residue chain is MCPSGRIAIPITTTANPNFRPAFEIIDTDHDGKISSDDLRAFYAGIPSGENNDETMIGTMISVADANKDGFVEFDEFEKVLETTPFSRSGNGGDDGLMKDVFKVMDKDGDGRLSYGDLKSYMDSAGLAVTDDEIKSMIRLAGGDLNDGVSFDGLLKIFGC.

EF-hand domains are found at residues 22–49 (AFEIIDTDHDGKISSDDLRAFYAGIPSG), 52–87 (NDETMIGTMISVADANKDGFVEFDEFEKVLETTPFS), and 93–128 (GDDGLMKDVFKVMDKDGDGRLSYGDLKSYMDSAGLA). D27, D29, D31, K33, D38, D65, N67, D69, E76, D106, D108, D110, R112, and D117 together coordinate Ca(2+).

Expressed in roots and flowers.

It localises to the cytoplasm. The protein localises to the cytosol. Binds calcium in vitro. This Arabidopsis thaliana (Mouse-ear cress) protein is Calcium-binding protein CP1.